Consider the following 115-residue polypeptide: Nitrogenase-stabilizing/protective protein NifW (115 aa).

Belongs to the NifW family. Homotrimer; associates with NifD.

In terms of biological role, may protect the nitrogenase Fe-Mo protein from oxidative damage. This is Nitrogenase-stabilizing/protective protein NifW from Methylobacterium sp. (strain 4-46).